The following is a 127-amino-acid chain: Small ribosomal subunit protein eS8 (127 aa).

The tract at residues 1 to 24 (MKWQGKSARKPTGGRLVPARGKRK) is disordered.

This sequence belongs to the eukaryotic ribosomal protein eS8 family. In terms of assembly, part of the 30S ribosomal subunit.

The chain is Small ribosomal subunit protein eS8 from Methanothrix thermoacetophila (strain DSM 6194 / JCM 14653 / NBRC 101360 / PT) (Methanosaeta thermophila).